A 194-amino-acid chain; its full sequence is Phosphoheptose isomerase (194 aa).

Positions 37 to 194 (ISNSFKQGGK…LIEFEMAKQA (158 aa)) constitute an SIS domain. 52-54 (NGG) is a substrate binding site. Positions 61 and 65 each coordinate Zn(2+). Residues E65, 93 to 94 (ND), 119 to 121 (STS), S124, and Q172 contribute to the substrate site. Zn(2+)-binding residues include Q172 and H180.

Belongs to the SIS family. GmhA subfamily. In terms of assembly, homotetramer. Zn(2+) serves as cofactor.

Its subcellular location is the cytoplasm. The catalysed reaction is 2 D-sedoheptulose 7-phosphate = D-glycero-alpha-D-manno-heptose 7-phosphate + D-glycero-beta-D-manno-heptose 7-phosphate. It participates in carbohydrate biosynthesis; D-glycero-D-manno-heptose 7-phosphate biosynthesis; D-glycero-alpha-D-manno-heptose 7-phosphate and D-glycero-beta-D-manno-heptose 7-phosphate from sedoheptulose 7-phosphate: step 1/1. Its function is as follows. Catalyzes the isomerization of sedoheptulose 7-phosphate in D-glycero-D-manno-heptose 7-phosphate. The sequence is that of Phosphoheptose isomerase from Haemophilus influenzae (strain PittGG).